Consider the following 231-residue polypeptide: Endo-1,4-beta-xylanase A (231 aa).

An N-terminal signal peptide occupies residues 1–19 (MVSFKSLLVAVSALTGALA). Asn-32 carries an N-linked (GlcNAc...) asparagine glycan. One can recognise a GH11 domain in the interval 41-229 (QVTGNSEGYH…SSGSSSIYVQ (189 aa)). The active-site Nucleophile is Glu-125. Catalysis depends on Glu-216, which acts as the Proton donor.

Belongs to the glycosyl hydrolase 11 (cellulase G) family.

Its subcellular location is the secreted. It catalyses the reaction Endohydrolysis of (1-&gt;4)-beta-D-xylosidic linkages in xylans.. Its pathway is glycan degradation; xylan degradation. With respect to regulation, inhibited by the proteinaceous endoxylanase inhibitor I from T.aestivum (TAXI-I). In terms of biological role, endo-1,4-beta-xylanase involved in the hydrolysis of xylan, a major structural heterogeneous polysaccharide found in plant biomass representing the second most abundant polysaccharide in the biosphere, after cellulose. Plays an important role in causing fusarium head blight (FHB) on cereal crops. The chain is Endo-1,4-beta-xylanase A (XYLA) from Gibberella zeae (strain ATCC MYA-4620 / CBS 123657 / FGSC 9075 / NRRL 31084 / PH-1) (Wheat head blight fungus).